A 362-amino-acid polypeptide reads, in one-letter code: Probable prephenate dehydrogenase NovF (362 aa).

Positions 2–283 (RTAVIIGTGM…GIDGSNRVPG (282 aa)) constitute a Prephenate/arogenate dehydrogenase domain.

The protein belongs to the prephenate/arogenate dehydrogenase family.

The catalysed reaction is prephenate + NAD(+) = 3-(4-hydroxyphenyl)pyruvate + CO2 + NADH. It functions in the pathway antibiotic biosynthesis; novobiocin biosynthesis. Its function is as follows. Probable prephenate dehydrogenase that produces 4-hydroxyphenylpyruvate (4HPP) in the novobiocin biosynthesis pathway. Novobiocin is an aminocoumarin family antibiotic that targets bacterial DNA gyrases. This Streptomyces niveus (Streptomyces spheroides) protein is Probable prephenate dehydrogenase NovF (novF).